The following is a 760-amino-acid chain: Catecholate siderophore receptor Fiu (760 aa).

An N-terminal signal peptide occupies residues 1 to 31 (MENNRNFPARQFHSLTFFAGLCIGITPVAQA). The region spanning 67–175 (PVADTTRTMT…PTGSINMISK (109 aa)) is the TBDR plug domain. One can recognise a TBDR beta-barrel domain in the interval 180–760 (DSGIDASASI…TFLLTANMHF (581 aa)). Positions 743-760 (RYHPGEPRTFLLTANMHF) match the TonB C-terminal box motif.

This sequence belongs to the TonB-dependent receptor family.

Its subcellular location is the cell outer membrane. Involved in the active transport across the outer membrane of iron complexed with catecholate siderophores such as dihydroxybenzoylserine and dihydroxybenzoate. It derives its energy for transport by interacting with the trans-periplasmic membrane protein TonB. Can also transport catechol-substituted cephalosporins. Receptor for microcins M, H47 and E492. The sequence is that of Catecholate siderophore receptor Fiu (fiu) from Escherichia coli (strain UTI89 / UPEC).